Reading from the N-terminus, the 637-residue chain is Probable polypeptide N-acetylgalactosaminyltransferase 8 (637 aa).

The Cytoplasmic segment spans residues 1 to 6; sequence MMFWRK. The helical; Signal-anchor for type II membrane protein transmembrane segment at 7–29 threads the bilayer; the sequence is LPKALFIGLTLAIAVNLLLVFSS. Topologically, residues 30-637 are lumenal; sequence KGTLQNLFTG…VRDWGQTNSQ (608 aa). N85, N107, and N160 each carry an N-linked (GlcNAc...) asparagine glycan. 5 cysteine pairs are disulfide-bonded: C171–C404, C395–C474, C509–C525, C556–C571, and C599–C617. Residues 180–294 are catalytic subdomain A; sequence LPSLSVILIF…VGWAEPILAR (115 aa). 2 residues coordinate substrate: D221 and R255. Residues D278, H280, and H409 each coordinate Mn(2+). The segment at 351–412 is catalytic subdomain B; it reads PVKSPSIMGI…PCSRIAHLER (62 aa). Substrate contacts are provided by R412 and Y417. One can recognise a Ricin B-type lectin domain in the interval 496 to 634; that stretch reads GYGRMKNLLD…QHTVRDWGQT (139 aa).

The protein belongs to the glycosyltransferase 2 family. GalNAc-T subfamily. It depends on Mn(2+) as a cofactor. Widely expressed. Expressed in heart, skeletal muscle, kidney, liver, small intestine and placenta. Weakly expressed in colon, thymus, spleen, lung and leukocyte.

Its subcellular location is the golgi apparatus membrane. The enzyme catalyses L-seryl-[protein] + UDP-N-acetyl-alpha-D-galactosamine = a 3-O-[N-acetyl-alpha-D-galactosaminyl]-L-seryl-[protein] + UDP + H(+). The catalysed reaction is L-threonyl-[protein] + UDP-N-acetyl-alpha-D-galactosamine = a 3-O-[N-acetyl-alpha-D-galactosaminyl]-L-threonyl-[protein] + UDP + H(+). Its pathway is protein modification; protein glycosylation. Its function is as follows. Probably catalyzes the initial reaction in O-linked oligosaccharide biosynthesis, the transfer of an N-acetyl-D-galactosamine residue to a serine or threonine residue on the protein receptor. In Homo sapiens (Human), this protein is Probable polypeptide N-acetylgalactosaminyltransferase 8 (GALNT8).